The sequence spans 2312 residues: Protein Ycf2 (2312 aa).

3 disordered regions span residues 170–191 (SSQL…GTED), 223–253 (TEIE…EMNN), and 942–1009 (KRKK…KRKE). Positions 232–242 (KGLSGSSSKSR) are enriched in low complexity. Basic and acidic residues-rich tracts occupy residues 243–252 (LFTEGEKEMN) and 950–1007 (KRKE…PEKR). 1439 to 1446 (GSIGSGRS) contributes to the ATP binding site. 3 disordered regions span residues 1513–1532 (YEDR…YEPG), 1857–1983 (LVGS…LLRP), and 2050–2166 (PAEE…DGFS). Positions 1863–1963 (TEEEVEGTEE…GEGTEDEEVE (101 aa)) are enriched in acidic residues. Residues 1964 to 1976 (GTEKDSSQFDNDR) show a composition bias toward basic and acidic residues. Composition is skewed to acidic residues over residues 2050–2067 (PAEE…EALE) and 2074–2149 (GEEE…ENDS).

Belongs to the Ycf2 family.

The protein localises to the plastid. Its subcellular location is the chloroplast stroma. In terms of biological role, probable ATPase of unknown function. Its presence in a non-photosynthetic plant (Epifagus virginiana) and experiments in tobacco indicate that it has an essential function which is probably not related to photosynthesis. In Oenothera parviflora (Small-flowered evening primrose), this protein is Protein Ycf2.